A 505-amino-acid chain; its full sequence is N-succinylglutamate 5-semialdehyde dehydrogenase (505 aa).

234–239 (GSAHTG) serves as a coordination point for NAD(+). Residues Glu257 and Cys291 contribute to the active site.

It belongs to the aldehyde dehydrogenase family. AstD subfamily.

The enzyme catalyses N-succinyl-L-glutamate 5-semialdehyde + NAD(+) + H2O = N-succinyl-L-glutamate + NADH + 2 H(+). The protein operates within amino-acid degradation; L-arginine degradation via AST pathway; L-glutamate and succinate from L-arginine: step 4/5. Its function is as follows. Catalyzes the NAD-dependent reduction of succinylglutamate semialdehyde into succinylglutamate. This is N-succinylglutamate 5-semialdehyde dehydrogenase from Yersinia pestis bv. Antiqua (strain Antiqua).